A 417-amino-acid polypeptide reads, in one-letter code: Probable secreted aspartic protease ARB_07536 (417 aa).

The first 20 residues, 1 to 20 (MRGILILVALGAATIPQASA), serve as a signal peptide directing secretion. In terms of domain architecture, Peptidase A1 spans 42 to 413 (NTDLVTIGTP…DFEKNRVGLA (372 aa)). 6 N-linked (GlcNAc...) asparagine glycosylation sites follow: N74, N91, N100, N170, N276, and N314. C333 and C373 are joined by a disulfide.

This sequence belongs to the peptidase A1 family.

The protein resides in the secreted. Functionally, probable secreted aspartic protease that supplies the fungus with nutrient amino acids. May be able to degrade the selected host's proteins involved in the immune defense. The protein is Probable secreted aspartic protease ARB_07536 of Arthroderma benhamiae (strain ATCC MYA-4681 / CBS 112371) (Trichophyton mentagrophytes).